The primary structure comprises 433 residues: Enolase (433 aa).

(2R)-2-phosphoglycerate is bound at residue Gln164. Residue Glu206 is the Proton donor of the active site. Positions 243, 289, and 316 each coordinate Mg(2+). Residues Lys341, Arg370, Ser371, and Lys392 each coordinate (2R)-2-phosphoglycerate. Lys341 serves as the catalytic Proton acceptor.

It belongs to the enolase family. Requires Mg(2+) as cofactor.

Its subcellular location is the cytoplasm. It localises to the secreted. The protein localises to the cell surface. The enzyme catalyses (2R)-2-phosphoglycerate = phosphoenolpyruvate + H2O. It participates in carbohydrate degradation; glycolysis; pyruvate from D-glyceraldehyde 3-phosphate: step 4/5. Its function is as follows. Catalyzes the reversible conversion of 2-phosphoglycerate (2-PG) into phosphoenolpyruvate (PEP). It is essential for the degradation of carbohydrates via glycolysis. In Borreliella burgdorferi (strain ZS7) (Borrelia burgdorferi), this protein is Enolase.